A 472-amino-acid polypeptide reads, in one-letter code: Eukaryotic translation initiation factor 2 subunit 3 (472 aa).

Position 2 is an N-acetylalanine (Ala2). Ser16 is modified (phosphoserine). The tr-type G domain occupies 39 to 248; it reads QATINIGTIG…IVKKIPVPPR (210 aa). Residues 48–55 are G1; the sequence is GHVAHGKS. Residue 51 to 56 coordinates GTP; the sequence is AHGKST. The interval 76-80 is G2; the sequence is NITIK. Positions 134 to 137 are G3; sequence DCPG. GTP-binding positions include 190–193 and 225–227; these read NKID and SAQ. The interval 190-193 is G4; the sequence is NKID. The segment at 225 to 227 is G5; sequence SAQ. An interacts with CDC123 region spans residues 457 to 469; it reads GQIRRGVTIKPTV.

It belongs to the TRAFAC class translation factor GTPase superfamily. Classic translation factor GTPase family. EIF2G subfamily. Eukaryotic translation initiation factor 2 eIF2 is a heterotrimeric complex composed of an alpha (EIF2S1), a beta (EIF2S2) and a gamma (EIF2S3) chain. eIF2 is member of the 43S pre-initiation complex (43S PIC). Interacts (via C-terminus) with CDC123; the interaction is direct.

It localises to the cytoplasm. Its subcellular location is the cytosol. It catalyses the reaction GTP + H2O = GDP + phosphate + H(+). Functionally, member of the eIF2 complex that functions in the early steps of protein synthesis by forming a ternary complex with GTP and initiator tRNA. This complex binds to a 40S ribosomal subunit, followed by mRNA binding to form the 43S pre-initiation complex (43S PIC). Junction of the 60S ribosomal subunit to form the 80S initiation complex is preceded by hydrolysis of the GTP bound to eIF2 and release of an eIF2-GDP binary complex. In order for eIF2 to recycle and catalyze another round of initiation, the GDP bound to eIF2 must exchange with GTP by way of a reaction catalyzed by eIF-2B. The protein is Eukaryotic translation initiation factor 2 subunit 3 (EIF2S3) of Sus scrofa (Pig).